The sequence spans 146 residues: MVKKVLLINGPNLNLLGTREPEKYGTTSLKDIEQAAQNQATAKQDGSEVLVYQNNTEGFIIDRIHLAKQEGVGFIIINAGAYTHTSVGIRDALLGTAIPFIEVHITNVHQREPFRHQSYLSDKAVAVICGLGVYGYTASVEYALNY.

Tyr24 (proton acceptor) is an active-site residue. The substrate site is built by Asn78, His84, and Asp91. The Proton donor role is filled by His104. Substrate is bound by residues 105–106 and Arg115; that span reads IT.

The protein belongs to the type-II 3-dehydroquinase family. In terms of assembly, homododecamer. Adopts a ring-like structure, composed of an arrangement of two hexameric rings stacked on top of one another.

It carries out the reaction 3-dehydroquinate = 3-dehydroshikimate + H2O. It participates in aromatic compound metabolism; 3,4-dihydroxybenzoate biosynthesis; 3,4-dihydroxybenzoate from 3-dehydroquinate: step 1/2. Is involved in the catabolism of quinate. Allows the utilization of quinate as carbon source via the beta-ketoadipate pathway. This is Catabolic 3-dehydroquinase from Scheffersomyces stipitis (strain ATCC 58785 / CBS 6054 / NBRC 10063 / NRRL Y-11545) (Yeast).